Reading from the N-terminus, the 105-residue chain is Phosphoribosyl-ATP pyrophosphatase (105 aa).

Belongs to the PRA-PH family.

The protein localises to the cytoplasm. The enzyme catalyses 1-(5-phospho-beta-D-ribosyl)-ATP + H2O = 1-(5-phospho-beta-D-ribosyl)-5'-AMP + diphosphate + H(+). It participates in amino-acid biosynthesis; L-histidine biosynthesis; L-histidine from 5-phospho-alpha-D-ribose 1-diphosphate: step 2/9. The polypeptide is Phosphoribosyl-ATP pyrophosphatase (Ruegeria pomeroyi (strain ATCC 700808 / DSM 15171 / DSS-3) (Silicibacter pomeroyi)).